A 383-amino-acid chain; its full sequence is Arginine biosynthesis bifunctional protein ArgJ 1 (383 aa).

Positions 1–25 are disordered; the sequence is MTVTAPKGSTGGGCRRGSKESGQPD. Thr146, Lys168, Thr179, Glu259, Asn378, and Ser383 together coordinate substrate. The active-site Nucleophile is Thr179.

It belongs to the ArgJ family. As to quaternary structure, heterotetramer of two alpha and two beta chains.

The protein localises to the cytoplasm. The catalysed reaction is N(2)-acetyl-L-ornithine + L-glutamate = N-acetyl-L-glutamate + L-ornithine. It carries out the reaction L-glutamate + acetyl-CoA = N-acetyl-L-glutamate + CoA + H(+). It functions in the pathway amino-acid biosynthesis; L-arginine biosynthesis; L-ornithine and N-acetyl-L-glutamate from L-glutamate and N(2)-acetyl-L-ornithine (cyclic): step 1/1. It participates in amino-acid biosynthesis; L-arginine biosynthesis; N(2)-acetyl-L-ornithine from L-glutamate: step 1/4. Functionally, catalyzes two activities which are involved in the cyclic version of arginine biosynthesis: the synthesis of N-acetylglutamate from glutamate and acetyl-CoA as the acetyl donor, and of ornithine by transacetylation between N(2)-acetylornithine and glutamate. The chain is Arginine biosynthesis bifunctional protein ArgJ 1 from Streptomyces clavuligerus.